Here is a 185-residue protein sequence, read N- to C-terminus: MSKEVLATAKEKMTKAEESLRRELGQIRAGRANASLLDRIQVEYYGAPTPVNQLASINIPEARVLMITPFDKNSIADIEKAIQMSDIGISPTNDGNVIRLVIPQLTEERRKELAKDVKKEAENSKVAVRNVRRDAMDELKKAQKNGDITEDELRSFEKDVQKLTDDSIKNIDAITAEKEQELLEV.

This sequence belongs to the RRF family.

The protein resides in the cytoplasm. Its function is as follows. Responsible for the release of ribosomes from messenger RNA at the termination of protein biosynthesis. May increase the efficiency of translation by recycling ribosomes from one round of translation to another. The chain is Ribosome-recycling factor from Enterococcus faecalis (strain ATCC 700802 / V583).